A 255-amino-acid chain; its full sequence is Diphthine synthase (255 aa).

Residues Leu9, Asp85, Val88, 113–114 (SI), Leu164, Ala207, and His232 each bind S-adenosyl-L-methionine.

This sequence belongs to the diphthine synthase family. In terms of assembly, homodimer.

It catalyses the reaction 2-[(3S)-amino-3-carboxypropyl]-L-histidyl-[translation elongation factor 2] + 3 S-adenosyl-L-methionine = diphthine-[translation elongation factor 2] + 3 S-adenosyl-L-homocysteine + 3 H(+). The protein operates within protein modification; peptidyl-diphthamide biosynthesis. S-adenosyl-L-methionine-dependent methyltransferase that catalyzes the trimethylation of the amino group of the modified target histidine residue in translation elongation factor 2 (EF-2), to form an intermediate called diphthine. The three successive methylation reactions represent the second step of diphthamide biosynthesis. This is Diphthine synthase from Methanococcus maripaludis (strain C7 / ATCC BAA-1331).